Reading from the N-terminus, the 140-residue chain is ATP synthase epsilon chain (140 aa).

The protein belongs to the ATPase epsilon chain family. As to quaternary structure, F-type ATPases have 2 components, CF(1) - the catalytic core - and CF(0) - the membrane proton channel. CF(1) has five subunits: alpha(3), beta(3), gamma(1), delta(1), epsilon(1). CF(0) has three main subunits: a, b and c.

The protein resides in the cell inner membrane. In terms of biological role, produces ATP from ADP in the presence of a proton gradient across the membrane. The protein is ATP synthase epsilon chain of Nitrosococcus oceani (strain ATCC 19707 / BCRC 17464 / JCM 30415 / NCIMB 11848 / C-107).